A 331-amino-acid polypeptide reads, in one-letter code: MSKVFMFDALRAATDEEMEKDLTVCVIGEDVGHYGGSYKVTKDLHSKYGDLRVLDTPIAENSFTGMAIGAAITGLRPIVEGMNMSFLLLAFNQISNNAGMLRYTSGGNFTLPLVIRGPGGVGRQLGAEHSQRLEAYFQAIPGLKIVACSTPYNAKGLLKSAIRDNNPVVFFEHVLLYNLQEEIPEDEYLIPLDKAEVVRKGKDITILTYSRMRHHVTEALPLLLNDGYDPEVLDLISLKPLDIDSISVSVKKTHRVLIVEECMKTAGIGAELIAQINEHLFDELDAPVVRLSSQDIPTPYNGSLEQATVIQPHQIIDAVKNIVNSSKTITT.

Glu60 lines the thiamine diphosphate pocket. K(+) is bound by residues Leu113, Ala161, Ile162, Asp164, and Asn166.

Heterodimer of an alpha and a beta chain. It depends on thiamine diphosphate as a cofactor.

The protein resides in the plastid. Its subcellular location is the chloroplast. The catalysed reaction is N(6)-[(R)-lipoyl]-L-lysyl-[protein] + pyruvate + H(+) = N(6)-[(R)-S(8)-acetyldihydrolipoyl]-L-lysyl-[protein] + CO2. In terms of biological role, the pyruvate dehydrogenase complex catalyzes the overall conversion of pyruvate to acetyl-CoA and CO(2). It contains multiple copies of three enzymatic components: pyruvate dehydrogenase (E1), dihydrolipoamide acetyltransferase (E2) and lipoamide dehydrogenase (E3). This Porphyra purpurea (Red seaweed) protein is Pyruvate dehydrogenase E1 component subunit beta (pdhB).